The primary structure comprises 101 residues: Large ribosomal subunit protein uL23 (101 aa).

The protein belongs to the universal ribosomal protein uL23 family. Part of the 50S ribosomal subunit. Contacts protein L29, and trigger factor when it is bound to the ribosome.

In terms of biological role, one of the early assembly proteins it binds 23S rRNA. One of the proteins that surrounds the polypeptide exit tunnel on the outside of the ribosome. Forms the main docking site for trigger factor binding to the ribosome. In Corynebacterium glutamicum (strain R), this protein is Large ribosomal subunit protein uL23.